A 266-amino-acid polypeptide reads, in one-letter code: uncharacterized protein (266 aa).

This is an uncharacterized protein from Ostreid herpesvirus 1 (isolate France) (OsHV-1).